A 416-amino-acid chain; its full sequence is Adenylosuccinate synthetase (416 aa).

GTP-binding positions include 12–18 and 40–42; these read GDEGKGK and GHT. Residue Asp-13 is the Proton acceptor of the active site. Mg(2+)-binding residues include Asp-13 and Gly-40. IMP contacts are provided by residues 13–16, 38–41, Thr-125, Arg-139, Gln-220, Thr-235, and Arg-299; these read DEGK and NAGH. Residue His-41 is the Proton donor of the active site. 295 to 301 provides a ligand contact to substrate; that stretch reads TTTGRPR. Residues Arg-301, 327 to 329, and 405 to 407 contribute to the GTP site; these read KLD and STS.

The protein belongs to the adenylosuccinate synthetase family. In terms of assembly, homodimer. It depends on Mg(2+) as a cofactor.

The protein localises to the cytoplasm. It catalyses the reaction IMP + L-aspartate + GTP = N(6)-(1,2-dicarboxyethyl)-AMP + GDP + phosphate + 2 H(+). It functions in the pathway purine metabolism; AMP biosynthesis via de novo pathway; AMP from IMP: step 1/2. Functionally, plays an important role in the de novo pathway of purine nucleotide biosynthesis. Catalyzes the first committed step in the biosynthesis of AMP from IMP. The protein is Adenylosuccinate synthetase of Nitratiruptor sp. (strain SB155-2).